The sequence spans 251 residues: uncharacterized protein (251 aa).

The protein to Anabaena PCC 7120 alr2406.

This is an uncharacterized protein from Synechocystis sp. (strain ATCC 27184 / PCC 6803 / Kazusa).